The following is a 444-amino-acid chain: Spermatogenesis-associated protein 1 (444 aa).

A coiled-coil region spans residues 268-403 (SLLKIEREKI…RKLDTDKMKL (136 aa)).

As to quaternary structure, interacts with IFT20. In terms of tissue distribution, highly abundant in the testis, and is also expressed in the heart and kidney (at protein level).

The protein resides in the cytoplasmic vesicle. Its subcellular location is the secretory vesicle. It is found in the acrosome. The chain is Spermatogenesis-associated protein 1 (Spata1) from Mus musculus (Mouse).